A 311-amino-acid polypeptide reads, in one-letter code: MLLVNEKDLVVPGQVLAENEYFPGRGTFKEDNRICSSFVGLVSVRNKKINVIPLQSKYIPKRGDVVIGEITDIRFSMWGLDINSPYTGLLPASEVFGKDKRELESVFDIVDVLLLRVVDVDEVKKVKLGLKGRGLGKFRDGILVYITPTKVPRLIGKRGSMINMVKEKTHCDIVVGQNGVVWIKGEPDMERIAEKVVLMIDREAHTSGLTDRVRELLDRLTGVEPEIQVEESEGTEKPETPESEDFEEASDYSEDVEVSPESEDIEEVSDESEDLEVESEDVEEGTDTPAAEEDDGEAGDAEVKDENNSER.

Residues 63–131 (GDVVIGEITD…EVKKVKLGLK (69 aa)) enclose the S1 motif domain. Positions 139–197 (RDGILVYITPTKVPRLIGKRGSMINMVKEKTHCDIVVGQNGVVWIKGEPDMERIAEKVV) constitute a KH domain. A disordered region spans residues 222-311 (GVEPEIQVEE…EVKDENNSER (90 aa)). Over residues 241–300 (PESEDFEEASDYSEDVEVSPESEDIEEVSDESEDLEVESEDVEEGTDTPAAEEDDGEAGD) the composition is skewed to acidic residues. The span at 301-311 (AEVKDENNSER) shows a compositional bias: basic and acidic residues.

The protein belongs to the RRP4 family. In terms of assembly, component of the archaeal exosome complex. Forms a trimer of Rrp4 and/or Csl4 subunits. The trimer associates with a hexameric ring-like arrangement composed of 3 Rrp41-Rrp42 heterodimers.

It is found in the cytoplasm. Functionally, non-catalytic component of the exosome, which is a complex involved in RNA degradation. Increases the RNA binding and the efficiency of RNA degradation. Confers strong poly(A) specificity to the exosome. The sequence is that of Exosome complex component Rrp4 from Methanothermobacter thermautotrophicus (strain ATCC 29096 / DSM 1053 / JCM 10044 / NBRC 100330 / Delta H) (Methanobacterium thermoautotrophicum).